We begin with the raw amino-acid sequence, 162 residues long: Peptidyl-prolyl cis-trans isomerase (162 aa).

The region spanning 5–161 is the PPIase cyclophilin-type domain; sequence FFDVIANGQP…ARIVIDKCGT (157 aa).

It belongs to the cyclophilin-type PPIase family. PPIase A subfamily.

Its subcellular location is the cytoplasm. It catalyses the reaction [protein]-peptidylproline (omega=180) = [protein]-peptidylproline (omega=0). With respect to regulation, binds cyclosporin A (CsA). CsA mediates some of its effects via an inhibitory action on PPIase. PPIases accelerate the folding of proteins. It catalyzes the cis-trans isomerization of proline imidic peptide bonds in oligopeptides. This is Peptidyl-prolyl cis-trans isomerase (ppi1) from Schizosaccharomyces pombe (strain 972 / ATCC 24843) (Fission yeast).